The chain runs to 99 residues: Acylphosphatase (99 aa).

In terms of domain architecture, Acylphosphatase-like spans 5 to 97; that stretch reads VRQVTVQGRV…RPGERFSTLP (93 aa). Catalysis depends on residues arginine 20 and asparagine 38.

The protein belongs to the acylphosphatase family.

The enzyme catalyses an acyl phosphate + H2O = a carboxylate + phosphate + H(+). This chain is Acylphosphatase (acyP), found in Rhodopseudomonas palustris (strain BisB18).